Here is an 801-residue protein sequence, read N- to C-terminus: U-box domain-containing protein 44 (801 aa).

In terms of domain architecture, U-box spans 22 to 101 (HIYEAFICPL…EEWRSRNDAA (80 aa)). ARM repeat units lie at residues 134–173 (RSNRHGVRNSQLIHMIIDMLKSTSHRVRYKALQTLQVVVE), 176–215 (DESKAIVAEGDTVRTLVKFLSHEPSKGREAAVSLLFELSK), 218–259 (ALCE…NMER), 261–300 (EEIVRQMASYGRLQPLLGKLLEGSPETKLSMASFLGELPL), 301–340 (NNDVKVLVAQTVGSSLVDLMRSGDMPQREAALKALNKISS), 342–386 (EGSA…NIVN), 390–429 (DFDKATLVSENRVENLLHLISNTGPAIQCKLLEVLVGLTS), 435–475 (PKVV…NLSP), and 480–521 (ELAK…ELPD).

In terms of assembly, interacts with AAO3. Binds to SD129. As to expression, expressed in leaves, root vasculature and guard cells.

The enzyme catalyses S-ubiquitinyl-[E2 ubiquitin-conjugating enzyme]-L-cysteine + [acceptor protein]-L-lysine = [E2 ubiquitin-conjugating enzyme]-L-cysteine + N(6)-ubiquitinyl-[acceptor protein]-L-lysine.. Its pathway is protein modification; protein ubiquitination. Functionally, functions as an E3 ubiquitin-protein ligase. Prevents premature senescence probably by targeting proteins involved in this process for degradation. Promotes the degradation of AAO3 and thus represses abscisic acid (ABA) biosynthesis. This Arabidopsis thaliana (Mouse-ear cress) protein is U-box domain-containing protein 44 (PUB44).